The chain runs to 501 residues: Acyl-CoA-binding domain-containing protein 5A (501 aa).

In terms of domain architecture, ACB spans 9–98 (YEQRFNAAVK…LKLILESMPV (90 aa)). Residues 20–29 (IQNLPPNGSF), 40–44 (YSYYK), Lys-66, and Tyr-85 contribute to the an acyl-CoA site. The disordered stretch occupies residues 173-405 (IDLEDREDDD…GERWGADGPM (233 aa)). Residues 176 to 195 (EDREDDDDEDEEGERDEVEE) are compositionally biased toward acidic residues. Over residues 219–235 (SNGSISQHKGLSNGTHG) the composition is skewed to polar residues. Basic and acidic residues-rich tracts occupy residues 236 to 254 (SKSD…HMNH), 266 to 283 (NSEK…HVAS), and 328 to 366 (RSQD…KRSD). Low complexity predominate over residues 376-389 (SRSPASGSGSAGPQ). Residues 406–437 (TENLNEQIICALARLQDDMQSVLQRLHTLEAL) are a coiled coil. A helical membrane pass occupies residues 465–485 (WWPFDVSLGTVAFAVVWPFVV).

This sequence belongs to the ATG37 family.

The protein localises to the membrane. Functionally, acyl-CoA binding protein which acts as the peroxisome receptor for pexophagy but is dispensable for aggrephagy and nonselective autophagy. Binds medium- and long-chain acyl-CoA esters. This is Acyl-CoA-binding domain-containing protein 5A (acbd5a) from Danio rerio (Zebrafish).